We begin with the raw amino-acid sequence, 210 residues long: Dynactin-associated protein (210 aa).

The Cytoplasmic portion of the chain corresponds to 1–113; it reads MVADIKGNEQ…YCRNDWSMWK (113 aa). Residues 114-134 traverse the membrane as a helical; Signal-anchor for type II membrane protein segment; sequence VFLACLLACVIMTAIGVLIIC. At 135–210 the chain is on the extracellular side; sequence LVNNKGSANS…PITVAPTDHL (76 aa). Residues 168–210 are disordered; sequence ACPPTMTTTSTVPASTATESTTSTATAATTSTEPITVAPTDHL. The segment covering 171-203 has biased composition (low complexity); sequence PTMTTTSTVPASTATESTTSTATAATTSTEPIT.

As to quaternary structure, interacts with DCTN1 and DCTN2. As to expression, expressed in fibroblast and numerous cancer cell lines (at protein level).

The protein resides in the golgi apparatus membrane. It localises to the cell membrane. In terms of biological role, plays a role in the regulation of cell proliferation. Promotes activation of the AKT1 signaling pathway. Promotes phosphorylation of AKT1 at 'Ser-473'. In Homo sapiens (Human), this protein is Dynactin-associated protein (DYNAP).